Here is an 859-residue protein sequence, read N- to C-terminus: Nitrate reductase [NADPH] (859 aa).

Cys-137 serves as a coordination point for Mo-molybdopterin. A Cytochrome b5 heme-binding domain is found at 502 to 578 (DVVIKYSEFE…LPSMHLGRLE (77 aa)). His-538 and His-561 together coordinate heme. In terms of domain architecture, FAD-binding FR-type spans 602-713 (RKWHKITLAE…KGPVGEFEYV (112 aa)). FAD contacts are provided by residues 655–658 (RAYT), 672–676 (LIKVY), Phe-677, 687–689 (IMT), Ser-737, and Thr-740. Residue 829–838 (MLLVCGPPGM) coordinates NADP(+).

The protein belongs to the nitrate reductase family. In terms of assembly, homodimer. The cofactor is FAD. Heme is required as a cofactor. Requires Mo-molybdopterin as cofactor.

It carries out the reaction nitrite + NADP(+) + H2O = nitrate + NADPH + H(+). Nitrate reductase is a key enzyme involved in the first step of nitrate assimilation in plants, fungi and bacteria. This is Nitrate reductase [NADPH] (YNR1) from Pichia angusta (Yeast).